The chain runs to 179 residues: Large ribosomal subunit protein uL6 (179 aa).

Belongs to the universal ribosomal protein uL6 family. Part of the 50S ribosomal subunit.

Its function is as follows. This protein binds to the 23S rRNA, and is important in its secondary structure. It is located near the subunit interface in the base of the L7/L12 stalk, and near the tRNA binding site of the peptidyltransferase center. The sequence is that of Large ribosomal subunit protein uL6 from Clostridium acetobutylicum (strain ATCC 824 / DSM 792 / JCM 1419 / IAM 19013 / LMG 5710 / NBRC 13948 / NRRL B-527 / VKM B-1787 / 2291 / W).